Here is a 201-residue protein sequence, read N- to C-terminus: Adenylyl-sulfate kinase (201 aa).

35–42 (GLSGSGKS) is an ATP binding site. Residue Ser-109 is the Phosphoserine intermediate of the active site.

This sequence belongs to the APS kinase family.

It catalyses the reaction adenosine 5'-phosphosulfate + ATP = 3'-phosphoadenylyl sulfate + ADP + H(+). The protein operates within sulfur metabolism; hydrogen sulfide biosynthesis; sulfite from sulfate: step 2/3. Catalyzes the synthesis of activated sulfate. This Escherichia coli (strain ATCC 8739 / DSM 1576 / NBRC 3972 / NCIMB 8545 / WDCM 00012 / Crooks) protein is Adenylyl-sulfate kinase.